The primary structure comprises 390 residues: MVEADRPGKLFIGGLNTETNEKALEAVFGKYGRIVEVLLMKDRETNKSRGFAFVTFESPADAKDAARDMNGKSLDGKAIKVEQATKPSFESGRRGLPPPPRSRGPPRGLRGGRGGSGGTRGPPSRGGHMDDGGYSMNFTLSSSRGPLPVKRGPPPRSGGPPPKRSAPSGPVRSSSGMGGRAPVSRGRDGYGGPPRREPLPSRRDVYLSPRDDGYSTKDSYSSRDYPSSRDTRDYAPPPRDYTYRDYGHSSSRDDYPSRGYSDRDGYGRERDYSDHPSGGSYRDSYESYGNSRSAPPTRGPPPSYGGSSRYDDYSSSRDGYGGSRDSYTSSRSDLYSSGRDRVGRQERGLPPSMERGYPPPRDSYSSSSRGAPRGGGRGGSRSDRGGRSRY.

The residue at position 1 (methionine 1) is an N-acetylmethionine; in Heterogeneous nuclear ribonucleoprotein G; alternate. Valine 2 bears the N-acetylvaline; in Heterogeneous nuclear ribonucleoprotein G, N-terminally processed mark. The region spanning 8-86 (GKLFIGGLNT…KAIKVEQATK (79 aa)) is the RRM domain. Residue lysine 22 forms a Glycyl lysine isopeptide (Lys-Gly) (interchain with G-Cter in SUMO2) linkage. At lysine 30 the chain carries N6-acetyllysine. Residues 58 to 390 (SPADAKDAAR…RSDRGGRSRY (333 aa)) are disordered. Positions 60 to 80 (ADAKDAARDMNGKSLDGKAIK) are enriched in basic and acidic residues. Glycyl lysine isopeptide (Lys-Gly) (interchain with G-Cter in SUMO2) cross-links involve residues lysine 80 and lysine 86. 2 positions are modified to phosphoserine: serine 88 and serine 91. Residues 109-120 (LRGGRGGSGGTR) show a composition bias toward gly residues. 3 positions are modified to omega-N-methylarginine: arginine 125, arginine 144, and arginine 164. Positions 151–164 (RGPPPRSGGPPPKR) are enriched in pro residues. Serine 165 carries the phosphoserine modification. Arginine 172 is modified (omega-N-methylarginine). Serine 174 bears the Phosphoserine mark. Composition is skewed to basic and acidic residues over residues 194-215 (PRREPLPSRRDVYLSPRDDGYS) and 241-274 (YTYRDYGHSSSRDDYPSRGYSDRDGYGRERDYSD). Serine 261, serine 329, serine 330, and serine 332 each carry phosphoserine. Residues 323 to 337 (SRDSYTSSRSDLYSS) are compositionally biased toward low complexity. Residues 338–347 (GRDRVGRQER) show a composition bias toward basic and acidic residues. Serine 352 is modified (phosphoserine). Residues 362 to 371 (DSYSSSSRGA) are compositionally biased toward low complexity. A compositionally biased stretch (basic and acidic residues) spans 380-390 (SRSDRGGRSRY).

In terms of assembly, homomultimer. Found in the supraspliceosome complex Identified in the spliceosome C complex. Interacts with KHDRBS3. Forms a complex with ILF2, ILF3, YLPM1, KHDRBS1, NCOA5 and PPP1CA. Interacts with SAFB/SAFB1. Interacts with ERAP1; the interaction is RNA-independent. Interacts with CLK2, KHDRBS2, SAFB, TRA2B and YTHDC1. Interacts with PPIA/CYPA. Post-translationally, O-glycosylated. In terms of processing, arg-182 is dimethylated, probably to asymmetric dimethylarginine. As to expression, expressed in brain, spleen, lung, liver, kidney, testis and heart. Weakly expressed in skeletal muscle (at protein level).

The protein localises to the nucleus. RNA-binding protein that plays several role in the regulation of pre- and post-transcriptional processes. Implicated in tissue-specific regulation of gene transcription and alternative splicing of several pre-mRNAs. Binds to and stimulates transcription from the tumor suppressor TXNIP gene promoter; may thus be involved in tumor suppression. When associated with SAFB, binds to and stimulates transcription from the SREBF1 promoter. Associates with nascent mRNAs transcribed by RNA polymerase II. Component of the supraspliceosome complex that regulates pre-mRNA alternative splice site selection. Can either activate or suppress exon inclusion; acts additively with TRA2B to promote exon 7 inclusion of the survival motor neuron SMN. Represses the splicing of MAPT/Tau exon 10. Binds preferentially to single-stranded 5'-CC[A/C]-rich RNA sequence motifs localized in a single-stranded conformation; probably binds RNA as a homodimer. Binds non-specifically to pre-mRNAs. Also plays a role in the cytoplasmic TNFR1 trafficking pathways; promotes both the IL-1-beta-mediated inducible proteolytic cleavage of TNFR1 ectodomains and the release of TNFR1 exosome-like vesicles to the extracellular compartment. The chain is RNA-binding motif protein, X chromosome (Rbmx) from Rattus norvegicus (Rat).